Consider the following 476-residue polypeptide: Bifunctional protein HldE (476 aa).

The tract at residues 1–319 (MKVSLPAFEK…RALSVNHGES (319 aa)) is ribokinase. 195 to 198 (NMGE) contributes to the ATP binding site. Residue aspartate 264 is part of the active site. Residues 345 to 476 (MTNGCFDILH…SIIENIMANQ (132 aa)) are cytidylyltransferase.

This sequence in the N-terminal section; belongs to the carbohydrate kinase PfkB family. The protein in the C-terminal section; belongs to the cytidylyltransferase family. In terms of assembly, homodimer.

The catalysed reaction is D-glycero-beta-D-manno-heptose 7-phosphate + ATP = D-glycero-beta-D-manno-heptose 1,7-bisphosphate + ADP + H(+). It carries out the reaction D-glycero-beta-D-manno-heptose 1-phosphate + ATP + H(+) = ADP-D-glycero-beta-D-manno-heptose + diphosphate. It participates in nucleotide-sugar biosynthesis; ADP-L-glycero-beta-D-manno-heptose biosynthesis; ADP-L-glycero-beta-D-manno-heptose from D-glycero-beta-D-manno-heptose 7-phosphate: step 1/4. It functions in the pathway nucleotide-sugar biosynthesis; ADP-L-glycero-beta-D-manno-heptose biosynthesis; ADP-L-glycero-beta-D-manno-heptose from D-glycero-beta-D-manno-heptose 7-phosphate: step 3/4. Functionally, catalyzes the phosphorylation of D-glycero-D-manno-heptose 7-phosphate at the C-1 position to selectively form D-glycero-beta-D-manno-heptose-1,7-bisphosphate. Its function is as follows. Catalyzes the ADP transfer from ATP to D-glycero-beta-D-manno-heptose 1-phosphate, yielding ADP-D-glycero-beta-D-manno-heptose. The polypeptide is Bifunctional protein HldE (Shewanella sediminis (strain HAW-EB3)).